We begin with the raw amino-acid sequence, 362 residues long: UDP-N-acetylglucosamine--N-acetylmuramyl-(pentapeptide) pyrophosphoryl-undecaprenol N-acetylglucosamine transferase (362 aa).

Residues 10–12 (TGG), asparagine 124, serine 194, isoleucine 249, and glutamine 294 each bind UDP-N-acetyl-alpha-D-glucosamine.

The protein belongs to the glycosyltransferase 28 family. MurG subfamily.

Its subcellular location is the cell membrane. It carries out the reaction Mur2Ac(oyl-L-Ala-gamma-D-Glu-L-Lys-D-Ala-D-Ala)-di-trans,octa-cis-undecaprenyl diphosphate + UDP-N-acetyl-alpha-D-glucosamine = beta-D-GlcNAc-(1-&gt;4)-Mur2Ac(oyl-L-Ala-gamma-D-Glu-L-Lys-D-Ala-D-Ala)-di-trans,octa-cis-undecaprenyl diphosphate + UDP + H(+). It participates in cell wall biogenesis; peptidoglycan biosynthesis. Its function is as follows. Cell wall formation. Catalyzes the transfer of a GlcNAc subunit on undecaprenyl-pyrophosphoryl-MurNAc-pentapeptide (lipid intermediate I) to form undecaprenyl-pyrophosphoryl-MurNAc-(pentapeptide)GlcNAc (lipid intermediate II). The polypeptide is UDP-N-acetylglucosamine--N-acetylmuramyl-(pentapeptide) pyrophosphoryl-undecaprenol N-acetylglucosamine transferase (Pediococcus pentosaceus (strain ATCC 25745 / CCUG 21536 / LMG 10740 / 183-1w)).